Consider the following 274-residue polypeptide: Pre-rRNA-processing protein PNO1 (274 aa).

A disordered region spans residues 1–70 (MVAPTALKKA…GSRKTHESKT (70 aa)). Acidic residues predominate over residues 33–48 (SIDEDDDDDVLLDDSD). Ser47 is subject to Phosphoserine. Thr51 is subject to Phosphothreonine. Positions 51-69 (TAKEEVEGEEGSRKTHESK) are enriched in basic and acidic residues. The 53-residue stretch at 195–247 (GDHLSRAIGRIAGKDGKTKFAIENATRTRIVLADSKIHILGGFTHIRMARESV) folds into the KH domain.

Belongs to the PNO1 family. In terms of assembly, component of the small ribosomal subunit, ribosomal RNA processing complex (SSU RRP complex). Interacts with NOB1.

The protein resides in the cytoplasm. The protein localises to the nucleus. It localises to the nucleolus. Its function is as follows. Required for small ribosomal subunit (SSU) synthesis. Has a role in the processing of early nucleolar and late cytoplasmic pre-RNA species. Recruits DIM1 to nucleolar pre-RNAs. Indirectly required for cleavage at the A2 site of the 20S pre-rRNA, forming 18S rRNA, and at A1 and A2 sites of other pre-rRNAs. In Saccharomyces cerevisiae (strain ATCC 204508 / S288c) (Baker's yeast), this protein is Pre-rRNA-processing protein PNO1 (PNO1).